Here is a 255-residue protein sequence, read N- to C-terminus: Keratin-associated protein 10-2 (255 aa).

22 consecutive repeat copies span residues 26-30 (CCELP), 36-40 (CCAPA), 57-61 (CCQAA), 79-83 (CCQQS), 89-93 (CCTSS), 99-103 (CCVPV), 104-108 (CCKPV), 109-113 (CCVPV), 114-118 (CCGAS), 120-124 (CCQQS), 130-134 (CCASS), 145-149 (CCKAV), 150-154 (CCVPT), 162-166 (CCQQS), 172-176 (CCTSS), 182-186 (CCVSV), 187-191 (CCKPV), 192-196 (CCKSI), 197-201 (CCVPV), 209-213 (CCQQS), 219-223 (CCTSS), and 224-228 (CCRPS). Residues 26-228 (CCELPCGTPS…CCTSSCCRPS (203 aa)) form a 22 X 5 AA repeats of C-C-X(3) region.

The protein belongs to the KRTAP type 10 family. In terms of assembly, interacts with hair keratins. Restricted to a narrow region of the hair fiber cuticle, lying approximately 20 cell layers above the apex of the dermal papilla of the hair root; not detected in any other tissues.

Its function is as follows. In the hair cortex, hair keratin intermediate filaments are embedded in an interfilamentous matrix, consisting of hair keratin-associated proteins (KRTAP), which are essential for the formation of a rigid and resistant hair shaft through their extensive disulfide bond cross-linking with abundant cysteine residues of hair keratins. The matrix proteins include the high-sulfur and high-glycine-tyrosine keratins. The sequence is that of Keratin-associated protein 10-2 (KRTAP10-2) from Homo sapiens (Human).